The chain runs to 338 residues: Ketol-acid reductoisomerase (NADP(+)) (338 aa).

Residues 1–181 (MKVFYDKDAD…GGGRAGIIET (181 aa)) form the KARI N-terminal Rossmann domain. NADP(+)-binding positions include 24–27 (YGSQ), arginine 47, and serine 52. Residue histidine 107 is part of the active site. NADP(+) is bound at residue glycine 133. In terms of domain architecture, KARI C-terminal knotted spans 182 to 327 (NFREETETDL…SKLRAMMPWI (146 aa)). Aspartate 190, glutamate 194, glutamate 226, and glutamate 230 together coordinate Mg(2+). Residue serine 251 participates in substrate binding.

This sequence belongs to the ketol-acid reductoisomerase family. Mg(2+) serves as cofactor.

The enzyme catalyses (2R)-2,3-dihydroxy-3-methylbutanoate + NADP(+) = (2S)-2-acetolactate + NADPH + H(+). It catalyses the reaction (2R,3R)-2,3-dihydroxy-3-methylpentanoate + NADP(+) = (S)-2-ethyl-2-hydroxy-3-oxobutanoate + NADPH + H(+). It functions in the pathway amino-acid biosynthesis; L-isoleucine biosynthesis; L-isoleucine from 2-oxobutanoate: step 2/4. Its pathway is amino-acid biosynthesis; L-valine biosynthesis; L-valine from pyruvate: step 2/4. Functionally, involved in the biosynthesis of branched-chain amino acids (BCAA). Catalyzes an alkyl-migration followed by a ketol-acid reduction of (S)-2-acetolactate (S2AL) to yield (R)-2,3-dihydroxy-isovalerate. In the isomerase reaction, S2AL is rearranged via a Mg-dependent methyl migration to produce 3-hydroxy-3-methyl-2-ketobutyrate (HMKB). In the reductase reaction, this 2-ketoacid undergoes a metal-dependent reduction by NADPH to yield (R)-2,3-dihydroxy-isovalerate. In Paraburkholderia xenovorans (strain LB400), this protein is Ketol-acid reductoisomerase (NADP(+)).